A 143-amino-acid polypeptide reads, in one-letter code: Transcriptional regulator MraZ (143 aa).

2 SpoVT-AbrB domains span residues 5–47 (EYHH…SMEE) and 76–119 (AMES…AKER).

It belongs to the MraZ family. In terms of assembly, forms oligomers.

It is found in the cytoplasm. It localises to the nucleoid. This is Transcriptional regulator MraZ from Lactobacillus helveticus (strain DPC 4571).